The chain runs to 459 residues: Ribulose bisphosphate carboxylase (459 aa).

Asn111 lines the substrate pocket. Lys166 (proton acceptor) is an active-site residue. Position 168 (Lys168) interacts with substrate. 3 residues coordinate Mg(2+): Lys191, Asp193, and Glu194. An N6-carboxylysine modification is found at Lys191. Residue His287 is the Proton acceptor of the active site. Substrate-binding residues include Arg288, His321, and Ser368.

This sequence belongs to the RuBisCO large chain family. Type II subfamily. As to quaternary structure, homodimer. Mg(2+) is required as a cofactor.

The enzyme catalyses 2 (2R)-3-phosphoglycerate + 2 H(+) = D-ribulose 1,5-bisphosphate + CO2 + H2O. It carries out the reaction D-ribulose 1,5-bisphosphate + O2 = 2-phosphoglycolate + (2R)-3-phosphoglycerate + 2 H(+). Its function is as follows. RuBisCO catalyzes two reactions: the carboxylation of D-ribulose 1,5-bisphosphate, the primary event in carbon dioxide fixation, as well as the oxidative fragmentation of the pentose substrate. Both reactions occur simultaneously and in competition at the same active site. The protein is Ribulose bisphosphate carboxylase of Albidiferax ferrireducens (strain ATCC BAA-621 / DSM 15236 / T118) (Rhodoferax ferrireducens).